A 455-amino-acid chain; its full sequence is Probable glycine dehydrogenase (decarboxylating) subunit 1 (455 aa).

This sequence belongs to the GcvP family. N-terminal subunit subfamily. In terms of assembly, the glycine cleavage system is composed of four proteins: P, T, L and H. In this organism, the P 'protein' is a heterodimer of two subunits.

It catalyses the reaction N(6)-[(R)-lipoyl]-L-lysyl-[glycine-cleavage complex H protein] + glycine + H(+) = N(6)-[(R)-S(8)-aminomethyldihydrolipoyl]-L-lysyl-[glycine-cleavage complex H protein] + CO2. The glycine cleavage system catalyzes the degradation of glycine. The P protein binds the alpha-amino group of glycine through its pyridoxal phosphate cofactor; CO(2) is released and the remaining methylamine moiety is then transferred to the lipoamide cofactor of the H protein. The protein is Probable glycine dehydrogenase (decarboxylating) subunit 1 of Francisella tularensis subsp. mediasiatica (strain FSC147).